The chain runs to 161 residues: Large ribosomal subunit protein uL15 (161 aa).

The tract at residues 1-42 is disordered; that stretch reads MKLSDIADNAGSRKKRMRVGRGIGSGKGKQSGRGGKGQTARS. Residues 21–37 are compositionally biased toward gly residues; it reads RGIGSGKGKQSGRGGKG.

This sequence belongs to the universal ribosomal protein uL15 family. Part of the 50S ribosomal subunit.

Binds to the 23S rRNA. This is Large ribosomal subunit protein uL15 from Bradyrhizobium diazoefficiens (strain JCM 10833 / BCRC 13528 / IAM 13628 / NBRC 14792 / USDA 110).